Here is a 282-residue protein sequence, read N- to C-terminus: NAC domain-containing protein 1 (282 aa).

The NAC domain maps to 9 to 161 (LPPGFRFHPT…DWVLCRIYKK (153 aa)). A DNA-binding region spans residues 106 to 167 (VGIKKALVFY…IYKKKNLGRT (62 aa)). Residues 161 to 188 (KKNLGRTIEMMKVEEEELEAQNVSTTNN) are a coiled coil.

In terms of tissue distribution, expressed in roots, stem, flowers, and leaves.

The protein resides in the nucleus. Transcription factor that binds DNA motifs 5'-CGT[AG](5N)NACG[ACT][AC][AT][ACG][ACT]-3' and 5'-CACG[ACT][AC][AT][AGT][CT]-3' in target genes promoters. Promotes leaf senescence and reduces fruit yield and sugar content, probably by establishing abscisic acid (ABA) homeostasis. The chain is NAC domain-containing protein 1 from Solanum lycopersicum (Tomato).